The chain runs to 441 residues: Divalent metal cation transporter MntH (441 aa).

11 helical membrane passes run 41-61 (TGIAALLPFVGPAVIASIGYM), 74-94 (AAYGYRLLWVVLAANAIAMLF), 116-136 (HFPAPIVWGMWIASEIAAMAT), 141-161 (FLGGALAFALLCHLPLFAGMI), 183-203 (AAIAALVGVIGACYLGELMIA), 223-243 (AALTIAVGIIGATIMPHTLYL), 271-291 (VVVALGLAGFVNLAMVMMAAS), 311-331 (IPVLGPAAGVLFLVALLTSGV), 360-380 (AVTIAPAFAVVACGCDVTRAM), 381-401 (VASQVVLSFVLPMPMIALLIL), and 419-439 (IVAGTATVVIVGLNAYLVWAA).

It belongs to the NRAMP family.

It localises to the cell inner membrane. Functionally, h(+)-stimulated, divalent metal cation uptake system. The sequence is that of Divalent metal cation transporter MntH from Burkholderia ambifaria (strain ATCC BAA-244 / DSM 16087 / CCUG 44356 / LMG 19182 / AMMD) (Burkholderia cepacia (strain AMMD)).